Reading from the N-terminus, the 704-residue chain is Elongation factor G (704 aa).

Residues 8–290 (ARYRNIGISA…AVIDYLPSPV (283 aa)) form the tr-type G domain. GTP is bound by residues 17-24 (AHIDAGKT), 88-92 (DTPGH), and 142-145 (NKMD).

It belongs to the TRAFAC class translation factor GTPase superfamily. Classic translation factor GTPase family. EF-G/EF-2 subfamily.

The protein localises to the cytoplasm. Functionally, catalyzes the GTP-dependent ribosomal translocation step during translation elongation. During this step, the ribosome changes from the pre-translocational (PRE) to the post-translocational (POST) state as the newly formed A-site-bound peptidyl-tRNA and P-site-bound deacylated tRNA move to the P and E sites, respectively. Catalyzes the coordinated movement of the two tRNA molecules, the mRNA and conformational changes in the ribosome. The protein is Elongation factor G of Salmonella agona (strain SL483).